A 166-amino-acid chain; its full sequence is uncharacterized protein (166 aa).

3 4Fe-4S ferredoxin-type domains span residues 44–73 (ARED…LKQQ), 75–104 (ATLE…PNFP), and 139–166 (STLE…ITLK). C53, C56, C59, C63, C84, C87, C90, and C94 together coordinate [4Fe-4S] cluster.

This is an uncharacterized protein from Haemophilus influenzae (strain ATCC 51907 / DSM 11121 / KW20 / Rd).